Reading from the N-terminus, the 319-residue chain is MSGPSHVPVLLDRVVALLAPPLEREGSVLVDATLGLGGHTEAVLTRFDLARVVGIDRDPEALALAGRRLAPFGDRFTGVHAVYDELPDVLARLGLDAVDAVLFDLGVSSMQLDVRERGFAYAEDAPLDMRMDGSTGPTAADVLNTYAAADLARILREYGEERFARKIAAAVVRERAKEPFTRSGRLVELLYAEIPAPARRTGGHPAKRTFQALRMEVNDELAVLRRAIPAAIDAIGVGGRVVVESYHSLEDRLVKQAFVAASRLDVPEDLPFVPAGHEPALRLVTRGAEKAGPEEIALNPRAASVRLRAIERTSKGAAA.

Residues 37 to 39, Asp56, Leu90, Asp104, and Gln111 contribute to the S-adenosyl-L-methionine site; that span reads GGH.

The protein belongs to the methyltransferase superfamily. RsmH family.

It localises to the cytoplasm. It catalyses the reaction cytidine(1402) in 16S rRNA + S-adenosyl-L-methionine = N(4)-methylcytidine(1402) in 16S rRNA + S-adenosyl-L-homocysteine + H(+). In terms of biological role, specifically methylates the N4 position of cytidine in position 1402 (C1402) of 16S rRNA. This Nocardioides sp. (strain ATCC BAA-499 / JS614) protein is Ribosomal RNA small subunit methyltransferase H.